Reading from the N-terminus, the 257-residue chain is Imidazole glycerol phosphate synthase subunit HisF (257 aa).

Residues Asp-12 and Asp-131 contribute to the active site.

Belongs to the HisA/HisF family. As to quaternary structure, heterodimer of HisH and HisF.

It localises to the cytoplasm. It catalyses the reaction 5-[(5-phospho-1-deoxy-D-ribulos-1-ylimino)methylamino]-1-(5-phospho-beta-D-ribosyl)imidazole-4-carboxamide + L-glutamine = D-erythro-1-(imidazol-4-yl)glycerol 3-phosphate + 5-amino-1-(5-phospho-beta-D-ribosyl)imidazole-4-carboxamide + L-glutamate + H(+). The protein operates within amino-acid biosynthesis; L-histidine biosynthesis; L-histidine from 5-phospho-alpha-D-ribose 1-diphosphate: step 5/9. Its function is as follows. IGPS catalyzes the conversion of PRFAR and glutamine to IGP, AICAR and glutamate. The HisF subunit catalyzes the cyclization activity that produces IGP and AICAR from PRFAR using the ammonia provided by the HisH subunit. In Burkholderia orbicola (strain MC0-3), this protein is Imidazole glycerol phosphate synthase subunit HisF.